Reading from the N-terminus, the 257-residue chain is Deoxyribose-phosphate aldolase (257 aa).

The active-site Proton donor/acceptor is D102. Residue K166 is the Schiff-base intermediate with acetaldehyde of the active site. K198 acts as the Proton donor/acceptor in catalysis.

Belongs to the DeoC/FbaB aldolase family. DeoC type 2 subfamily.

The protein localises to the cytoplasm. It carries out the reaction 2-deoxy-D-ribose 5-phosphate = D-glyceraldehyde 3-phosphate + acetaldehyde. It functions in the pathway carbohydrate degradation; 2-deoxy-D-ribose 1-phosphate degradation; D-glyceraldehyde 3-phosphate and acetaldehyde from 2-deoxy-alpha-D-ribose 1-phosphate: step 2/2. In terms of biological role, catalyzes a reversible aldol reaction between acetaldehyde and D-glyceraldehyde 3-phosphate to generate 2-deoxy-D-ribose 5-phosphate. This Shewanella piezotolerans (strain WP3 / JCM 13877) protein is Deoxyribose-phosphate aldolase.